The chain runs to 537 residues: Synaptotagmin-2 (537 aa).

At 1–2 (MG) the chain is on the cytoplasmic side. The helical transmembrane segment at 3–23 (IISTILGVIGFGFGTTIGIVI) threads the bilayer. The Lumenal segment spans residues 24 to 537 (GYYLFIYFQS…QIELQWRNSS (514 aa)). Residues 67–249 (DFDRIDWLNK…WPKTLNVQIM (183 aa)) enclose the SMP-LTD domain. The interval 227 to 505 (QEIIKDQVAN…TLGYVVINLG (279 aa)) is phospholipid binding. 2 consecutive C2 domains span residues 240–362 (WPKT…LMTL) and 402–517 (DPNA…NDKY). D276, D282, D332, and E334 together coordinate Ca(2+).

It belongs to the synaptotagmin family. Ca(2+) is required as a cofactor.

It is found in the golgi apparatus membrane. Functionally, may play an important role in regulating an unconventional protein trafficking from the cytosol to the extracellular matrix. This is Synaptotagmin-2 (SYT2) from Arabidopsis thaliana (Mouse-ear cress).